Consider the following 131-residue polypeptide: Glycine cleavage system H protein (131 aa).

The Lipoyl-binding domain maps to R24–E106. K65 is modified (N6-lipoyllysine).

The protein belongs to the GcvH family. The glycine cleavage system is composed of four proteins: P, T, L and H. (R)-lipoate serves as cofactor.

Functionally, the glycine cleavage system catalyzes the degradation of glycine. The H protein shuttles the methylamine group of glycine from the P protein to the T protein. The protein is Glycine cleavage system H protein of Xylella fastidiosa (strain M12).